Reading from the N-terminus, the 372-residue chain is Glutamate 5-kinase (372 aa).

Residue Lys-6 participates in ATP binding. Residues Ser-46, Asp-133, and Asn-145 each contribute to the substrate site. Residues Thr-165 to Asp-166 and Thr-207 to Lys-213 contribute to the ATP site. Positions Asn-272–Lys-350 constitute a PUA domain.

Belongs to the glutamate 5-kinase family.

It localises to the cytoplasm. It catalyses the reaction L-glutamate + ATP = L-glutamyl 5-phosphate + ADP. It functions in the pathway amino-acid biosynthesis; L-proline biosynthesis; L-glutamate 5-semialdehyde from L-glutamate: step 1/2. Functionally, catalyzes the transfer of a phosphate group to glutamate to form L-glutamate 5-phosphate. This is Glutamate 5-kinase from Caldanaerobacter subterraneus subsp. tengcongensis (strain DSM 15242 / JCM 11007 / NBRC 100824 / MB4) (Thermoanaerobacter tengcongensis).